Here is a 459-residue protein sequence, read N- to C-terminus: Argininosuccinate lyase (459 aa).

The protein belongs to the lyase 1 family. Argininosuccinate lyase subfamily.

It is found in the cytoplasm. It catalyses the reaction 2-(N(omega)-L-arginino)succinate = fumarate + L-arginine. It participates in amino-acid biosynthesis; L-arginine biosynthesis; L-arginine from L-ornithine and carbamoyl phosphate: step 3/3. The polypeptide is Argininosuccinate lyase (Chromobacterium violaceum (strain ATCC 12472 / DSM 30191 / JCM 1249 / CCUG 213 / NBRC 12614 / NCIMB 9131 / NCTC 9757 / MK)).